Here is a 536-residue protein sequence, read N- to C-terminus: Phosphoenolpyruvate carboxykinase (ATP) (536 aa).

Substrate contacts are provided by arginine 61, tyrosine 195, and lysine 201. ATP is bound by residues lysine 201, histidine 220, and 236–244 (GLSGTGKTT). Residues lysine 201 and histidine 220 each contribute to the Mn(2+) site. Aspartate 257 is a binding site for Mn(2+). ATP is bound by residues glutamate 285, arginine 322, and threonine 447. Arginine 322 contacts substrate.

Belongs to the phosphoenolpyruvate carboxykinase (ATP) family. It depends on Mn(2+) as a cofactor.

The protein resides in the cytoplasm. The enzyme catalyses oxaloacetate + ATP = phosphoenolpyruvate + ADP + CO2. Its pathway is carbohydrate biosynthesis; gluconeogenesis. Its function is as follows. Involved in the gluconeogenesis. Catalyzes the conversion of oxaloacetate (OAA) to phosphoenolpyruvate (PEP) through direct phosphoryl transfer between the nucleoside triphosphate and OAA. The chain is Phosphoenolpyruvate carboxykinase (ATP) from Mesorhizobium japonicum (strain LMG 29417 / CECT 9101 / MAFF 303099) (Mesorhizobium loti (strain MAFF 303099)).